Reading from the N-terminus, the 297-residue chain is Cbb3-type cytochrome c oxidase subunit CcoP (297 aa).

The Cytoplasmic portion of the chain corresponds to 1 to 35 (MSKKPTTKKEVQTTGHSWDGIEELNTPLPRWWLWT). A helical membrane pass occupies residues 36 to 56 (FYATIVWGVAYSIAMPAWPIF). The Periplasmic portion of the chain corresponds to 57–297 (ASGATPGILG…SYVHSLGGGQ (241 aa)). 2 Cytochrome c domains span residues 108 to 199 (YTRN…LKIS) and 206 to 294 (ARAT…HSLG). Heme c contacts are provided by cysteine 121, cysteine 124, histidine 125, methionine 174, cysteine 219, cysteine 222, histidine 223, and methionine 264.

The protein belongs to the CcoP / FixP family. Component of the cbb3-type cytochrome c oxidase at least composed of CcoN, CcoO, CcoQ and CcoP. Interacts with CcoH (via transmembrane domain). Heme c is required as a cofactor.

Its subcellular location is the cell inner membrane. It functions in the pathway energy metabolism; oxidative phosphorylation. Functionally, C-type cytochrome. Part of the cbb3-type cytochrome c oxidase complex. CcoP subunit is required for transferring electrons from donor cytochrome c via its heme groups to CcoO subunit. From there, electrons are shuttled to the catalytic binuclear center of CcoN subunit where oxygen reduction takes place. The complex also functions as a proton pump. This Rhodobacter capsulatus (strain ATCC BAA-309 / NBRC 16581 / SB1003) protein is Cbb3-type cytochrome c oxidase subunit CcoP.